The sequence spans 159 residues: uncharacterized protein (159 aa).

A compositionally biased stretch (polar residues) spans methionine 1–glutamine 13. The tract at residues methionine 1–cysteine 57 is disordered. Positions glycine 14–serine 35 are enriched in low complexity. Basic and acidic residues predominate over residues glutamine 38 to glutamate 47.

This is an uncharacterized protein from Homo sapiens (Human).